A 215-amino-acid polypeptide reads, in one-letter code: Flavin-dependent thymidylate synthase (215 aa).

Positions 1–215 (MDVRFISLTK…FPTVAAALEW (215 aa)) constitute a ThyX domain. FAD contacts are provided by residues Ser-56, 79–81 (RHR), and Glu-87. Residues 76–79 (QILR), 87–91 (EFSLR), and Arg-155 each bind dUMP. A ThyX motif motif is present at residues 79 to 89 (RHRSFSFQEFS). His-177 is an FAD binding site. Arg-182 contacts dUMP. The Involved in ionization of N3 of dUMP, leading to its activation role is filled by Arg-182.

The protein belongs to the thymidylate synthase ThyX family. As to quaternary structure, homotetramer. FAD serves as cofactor.

The catalysed reaction is dUMP + (6R)-5,10-methylene-5,6,7,8-tetrahydrofolate + NADPH + H(+) = dTMP + (6S)-5,6,7,8-tetrahydrofolate + NADP(+). It participates in pyrimidine metabolism; dTTP biosynthesis. Functionally, catalyzes the reductive methylation of 2'-deoxyuridine-5'-monophosphate (dUMP) to 2'-deoxythymidine-5'-monophosphate (dTMP) while utilizing 5,10-methylenetetrahydrofolate (mTHF) as the methyl donor, and NADPH and FADH(2) as the reductant. The polypeptide is Flavin-dependent thymidylate synthase (Synechocystis sp. (strain ATCC 27184 / PCC 6803 / Kazusa)).